The chain runs to 733 residues: Methionine--tRNA ligase (733 aa).

Positions 11-21 (PYANGPIHAGH) match the 'HIGH' region motif. Positions 143, 146, 156, and 159 each coordinate Zn(2+). The 'KMSKS' region signature appears at 345–349 (KFSTS). Thr-348 is a binding site for ATP. Positions 633-733 (DFMKLDLRVG…KEVKLGARIR (101 aa)) constitute a tRNA-binding domain.

The protein belongs to the class-I aminoacyl-tRNA synthetase family. MetG type 1 subfamily. As to quaternary structure, homodimer. It depends on Zn(2+) as a cofactor.

It localises to the cytoplasm. It catalyses the reaction tRNA(Met) + L-methionine + ATP = L-methionyl-tRNA(Met) + AMP + diphosphate. Is required not only for elongation of protein synthesis but also for the initiation of all mRNA translation through initiator tRNA(fMet) aminoacylation. The chain is Methionine--tRNA ligase from Thermococcus onnurineus (strain NA1).